The following is a 203-amino-acid chain: Dephospho-CoA kinase (203 aa).

Residues 5–203 (IVGLTGGIAS…VVYRVAASEH (199 aa)) form the DPCK domain. 13 to 18 (ASGKSA) contributes to the ATP binding site.

The protein belongs to the CoaE family.

It localises to the cytoplasm. It carries out the reaction 3'-dephospho-CoA + ATP = ADP + CoA + H(+). It participates in cofactor biosynthesis; coenzyme A biosynthesis; CoA from (R)-pantothenate: step 5/5. In terms of biological role, catalyzes the phosphorylation of the 3'-hydroxyl group of dephosphocoenzyme A to form coenzyme A. The chain is Dephospho-CoA kinase from Xanthomonas euvesicatoria pv. vesicatoria (strain 85-10) (Xanthomonas campestris pv. vesicatoria).